The following is a 281-amino-acid chain: Bifunctional protein FolD (281 aa).

NADP(+) contacts are provided by residues 165 to 167, T192, and V233; that span reads GRG.

Belongs to the tetrahydrofolate dehydrogenase/cyclohydrolase family. Homodimer.

The enzyme catalyses (6R)-5,10-methylene-5,6,7,8-tetrahydrofolate + NADP(+) = (6R)-5,10-methenyltetrahydrofolate + NADPH. It catalyses the reaction (6R)-5,10-methenyltetrahydrofolate + H2O = (6R)-10-formyltetrahydrofolate + H(+). The protein operates within one-carbon metabolism; tetrahydrofolate interconversion. Catalyzes the oxidation of 5,10-methylenetetrahydrofolate to 5,10-methenyltetrahydrofolate and then the hydrolysis of 5,10-methenyltetrahydrofolate to 10-formyltetrahydrofolate. This Mycobacterium marinum (strain ATCC BAA-535 / M) protein is Bifunctional protein FolD.